We begin with the raw amino-acid sequence, 325 residues long: E3 ubiquitin-protein ligase SIAH2 (325 aa).

Residues 1-15 (MSRPSSTGPSANKPC) show a composition bias toward polar residues. A disordered region spans residues 1–43 (MSRPSSTGPSANKPCSKQPPPPQTPHAPSPAAPPAAATISAAG). At Ser-6 the chain carries Phosphoserine. Position 16 is a phosphoserine; by DYRK2 (Ser-16). Positions 17 to 33 (KQPPPPQTPHAPSPAAP) are enriched in pro residues. Position 24 is a phosphothreonine; by MAPK14 (Thr-24). A Phosphoserine; by DYRK2 and MAPK14 modification is found at Ser-29. Low complexity predominate over residues 34-43 (PAAATISAAG). Phosphoserine; by DYRK2 is present on Ser-69. The RING-type zinc-finger motif lies at 81–116 (CPVCFDYVLPPILQCQAGHLVCNQCRQKLSCCPTCR). At Thr-120 the chain carries Phosphothreonine; by DYRK2. The tract at residues 131 to 323 (VASAVLFPCK…LGINVTISTC (193 aa)) is SBD. The SIAH-type zinc-finger motif lies at 134–194 (AVLFPCKYAT…VMSHLMHAHK (61 aa)). Zn(2+) contacts are provided by Cys-139, Cys-146, His-158, Cys-162, Cys-169, Cys-176, His-188, and His-193.

The protein belongs to the SINA (Seven in absentia) family. Homodimer. Interacts with VAV1, without mediating its ubiquitin-mediated degradation. Probable component of some large E3 complex possibly composed of UBE2D1, SIAH2, CACYBP/SIP, SKP1, APC and TBL1X. Interacts with UBE2I. Interacts with UBE2E2. Interacts with PEG10, which may inhibit its activity. Interacts with PEG3 and EGLN2. Interacts with DYRK2. Interacts with SNCAIP. Interacts with NR1D1 and NR1D2. Interacts with DCC. Interacts with AXIN1. Post-translationally, phosphorylated at Thr-24 and Ser-29 by MAPK14, which mediates the degradation by the proteasome of EGLN3. Phosphorylated at Ser-29 by DYRK2; this increases the ubiquitin ligase activity and promotes degradation of EGLN3. Detected in brain (at protein level).

It is found in the cytoplasm. It localises to the nucleus. The catalysed reaction is S-ubiquitinyl-[E2 ubiquitin-conjugating enzyme]-L-cysteine + [acceptor protein]-L-lysine = [E2 ubiquitin-conjugating enzyme]-L-cysteine + N(6)-ubiquitinyl-[acceptor protein]-L-lysine.. Its pathway is protein modification; protein ubiquitination. Functionally, E3 ubiquitin-protein ligase that mediates ubiquitination and subsequent proteasomal degradation of target proteins. E3 ubiquitin ligases accept ubiquitin from an E2 ubiquitin-conjugating enzyme in the form of a thioester and then directly transfers the ubiquitin to targeted substrates. Mediates E3 ubiquitin ligase activity either through direct binding to substrates or by functioning as the essential RING domain subunit of larger E3 complexes. Mediates ubiquitination and proteasomal degradation of DYRK2 in response to hypoxia. Promotes monoubiquitination of SNCA. Triggers the ubiquitin-mediated degradation of many substrates, including proteins involved in transcription regulation (GPS2, POU2AF1, PML, NCOR1), a cell surface receptor (DCC), an antiapoptotic protein (BAG1), and a protein involved in synaptic vesicle function in neurons (SYP). It is thereby involved in apoptosis, tumor suppression, cell cycle, transcription and signaling processes. Has some overlapping function with SIAH1. Triggers the ubiquitin-mediated degradation of TRAF2, whereas SIAH1 does not. Regulates cellular clock function via ubiquitination of circadian transcriptional repressors NR1D1 and NR1D2 leading to their proteasomal degradation. Plays an important role in mediating the rhythmic degradation/clearance of NR1D1 and NR1D2 contributing to their circadian profile of protein abundance. Mediates ubiquitination and degradation of EGLN2 and EGLN3 in response to the unfolded protein response (UPR), leading to their degradation and subsequent stabilization of ATF4. Also part of the Wnt signaling pathway in which it mediates the Wnt-induced ubiquitin-mediated proteasomal degradation of AXIN1. This is E3 ubiquitin-protein ligase SIAH2 (Siah2) from Rattus norvegicus (Rat).